The chain runs to 186 residues: Lactoylglutathione lyase (186 aa).

In terms of domain architecture, VOC spans 28-175 (FMQQTMFRIK…DGYWIELFDR (148 aa)). 2 residues coordinate substrate: Gln-31 and Arg-35. Gln-31 contacts Zn(2+). Glu-97 is a binding site for Zn(2+). Residues Asn-101, Arg-121, His-125, and 155 to 156 (KM) contribute to the substrate site. His-125 contributes to the Zn(2+) binding site. Glu-171 contacts Zn(2+). The active-site Proton donor/acceptor is Glu-171.

The protein belongs to the glyoxalase I family. Requires Zn(2+) as cofactor.

The catalysed reaction is (R)-S-lactoylglutathione = methylglyoxal + glutathione. It functions in the pathway secondary metabolite metabolism; methylglyoxal degradation; (R)-lactate from methylglyoxal: step 1/2. Catalyzes the conversion of hemimercaptal, formed from methylglyoxal and glutathione, to S-lactoylglutathione. In Cicer arietinum (Chickpea), this protein is Lactoylglutathione lyase.